The chain runs to 252 residues: 7-carboxy-7-deazaguanine synthase (252 aa).

Substrate is bound by residues 22 to 24 (LQG) and arginine 37. The 224-residue stretch at 28–251 (FVGEPQAFVR…QVHKLVDFIP (224 aa)) folds into the Radical SAM core domain. [4Fe-4S] cluster-binding residues include cysteine 41, cysteine 45, and cysteine 48. Threonine 102 provides a ligand contact to substrate. S-adenosyl-L-methionine is bound at residue glycine 104.

It belongs to the radical SAM superfamily. 7-carboxy-7-deazaguanine synthase family. Homodimer. It depends on [4Fe-4S] cluster as a cofactor. S-adenosyl-L-methionine is required as a cofactor. Requires Mg(2+) as cofactor.

The catalysed reaction is 6-carboxy-5,6,7,8-tetrahydropterin + H(+) = 7-carboxy-7-deazaguanine + NH4(+). It participates in purine metabolism; 7-cyano-7-deazaguanine biosynthesis. Its function is as follows. Catalyzes the complex heterocyclic radical-mediated conversion of 6-carboxy-5,6,7,8-tetrahydropterin (CPH4) to 7-carboxy-7-deazaguanine (CDG), a step common to the biosynthetic pathways of all 7-deazapurine-containing compounds. The sequence is that of 7-carboxy-7-deazaguanine synthase from Methanopyrus kandleri (strain AV19 / DSM 6324 / JCM 9639 / NBRC 100938).